A 448-amino-acid polypeptide reads, in one-letter code: U1 small nuclear ribonucleoprotein 70 kDa (448 aa).

A required for interaction with U1 RNA region spans residues 91–201 (TEIKNATEDP…GGGLGGTRRG (111 aa)). The RRM domain occupies 102–180 (RTLFIARINY…KRVLVDVERA (79 aa)). The interval 188 to 448 (PRRLGGGLGG…SSGDPSWWRQ (261 aa)) is disordered. Residues 191-200 (LGGGLGGTRR) show a composition bias toward gly residues. 2 stretches are compositionally biased toward basic and acidic residues: residues 206-234 (NIKH…REGP) and 262-272 (ERRDRERDRGR). Positions 281 to 293 (SRSRSRERRKRRA) are enriched in basic residues. Basic and acidic residues-rich tracts occupy residues 294-320 (GSRE…DRER) and 346-376 (RDRE…IKEE). The tract at residues 405 to 425 (RPPPAHHNMFSVPPPPILGRG) is mediates binding to Psi. Positions 426 to 448 (NASTNPNPDNGQQSSGDPSWWRQ) are enriched in polar residues.

Component of the U1 snRNP. Interacts with Psi; essential for alternative splicing of P-element transposase. Interacts with the SMN complex.

It localises to the nucleus speckle. The protein resides in the nucleus. The protein localises to the nucleoplasm. Its function is as follows. Mediates the splicing of pre-mRNA by binding to the stem loop I region of U1-snRNA. Required during oogenesis for nurse cell chromatin dispersal. The polypeptide is U1 small nuclear ribonucleoprotein 70 kDa (snRNP-U1-70K) (Drosophila melanogaster (Fruit fly)).